Here is a 214-residue protein sequence, read N- to C-terminus: Riboflavin kinase (214 aa).

Positions 1–26 (MRPDGPRDPVVGPDSGPEPPYPVRLS) are disordered. The Mg(2+) site is built by Thr44 and Asn46. Glu112 functions as the Nucleophile in the catalytic mechanism.

This sequence belongs to the flavokinase family. The cofactor is Zn(2+). It depends on Mg(2+) as a cofactor.

The enzyme catalyses riboflavin + ATP = FMN + ADP + H(+). It functions in the pathway cofactor biosynthesis; FMN biosynthesis; FMN from riboflavin (ATP route): step 1/1. Functionally, catalyzes the phosphorylation of riboflavin (vitamin B2) to form flavin mononucleotide (FMN) coenzyme. This chain is Riboflavin kinase (fmn1), found in Aspergillus clavatus (strain ATCC 1007 / CBS 513.65 / DSM 816 / NCTC 3887 / NRRL 1 / QM 1276 / 107).